The chain runs to 132 residues: MSKSLNIIWQYLRAFVLIYACLYAGIFIASLLPITIPGSIIGMLILFVLLALQILPAKWVNPGCYVLIRYMALLFVPIGVGVMQYFDLLRAQFGPVVVSCAISTLVVFLVVSWSSHIVHGERKVLGQKGSKK.

4 helical membrane-spanning segments follow: residues 7–27 (IIWQ…AGIF), 31–51 (LLPI…VLLA), 63–83 (GCYV…VGVM), and 93–113 (FGPV…VVSW).

This sequence belongs to the UPF0299 family.

Its subcellular location is the cell inner membrane. This is UPF0299 membrane protein CKO_00648 from Citrobacter koseri (strain ATCC BAA-895 / CDC 4225-83 / SGSC4696).